The primary structure comprises 338 residues: DNA-directed RNA polymerase subunit alpha (338 aa).

The span at Met-1 to Glu-10 shows a compositional bias: polar residues. A disordered region spans residues Met-1–Lys-24. Residues Met-1–Glu-234 are alpha N-terminal domain (alpha-NTD). An alpha C-terminal domain (alpha-CTD) region spans residues Phe-250–Tyr-338.

This sequence belongs to the RNA polymerase alpha chain family. Homodimer. The RNAP catalytic core consists of 2 alpha, 1 beta, 1 beta' and 1 omega subunit. When a sigma factor is associated with the core the holoenzyme is formed, which can initiate transcription.

The catalysed reaction is RNA(n) + a ribonucleoside 5'-triphosphate = RNA(n+1) + diphosphate. Its function is as follows. DNA-dependent RNA polymerase catalyzes the transcription of DNA into RNA using the four ribonucleoside triphosphates as substrates. The polypeptide is DNA-directed RNA polymerase subunit alpha (Rhodospirillum centenum (strain ATCC 51521 / SW)).